Here is a 106-residue protein sequence, read N- to C-terminus: MSIFYVLGKKGTIEILYKIKEGVNSFTSIKNALDMEGCGVSTRTLAERLNELEDENLIQKDGSKYYLTKKGQEALEIIENVMKWEAKWKEAKIPKIIIGMLGDKER.

The 93-residue stretch at 1-93 (MSIFYVLGKK…WEAKWKEAKI (93 aa)) folds into the HTH hxlR-type domain.

This is an uncharacterized protein from Methanocaldococcus jannaschii (strain ATCC 43067 / DSM 2661 / JAL-1 / JCM 10045 / NBRC 100440) (Methanococcus jannaschii).